A 422-amino-acid polypeptide reads, in one-letter code: 3-phosphoshikimate 1-carboxyvinyltransferase (422 aa).

Residues Lys-24, Ser-25, and Arg-29 each contribute to the 3-phosphoshikimate site. A phosphoenolpyruvate-binding site is contributed by Lys-24. The phosphoenolpyruvate site is built by Gly-93 and Arg-121. Residues Ser-164, Ser-165, Gln-166, Glu-308, and His-335 each coordinate 3-phosphoshikimate. Phosphoenolpyruvate is bound at residue Gln-166. The active-site Proton acceptor is the Glu-308. Positions 339, 380, and 405 each coordinate phosphoenolpyruvate.

The protein belongs to the EPSP synthase family. Monomer.

Its subcellular location is the cytoplasm. The enzyme catalyses 3-phosphoshikimate + phosphoenolpyruvate = 5-O-(1-carboxyvinyl)-3-phosphoshikimate + phosphate. Its pathway is metabolic intermediate biosynthesis; chorismate biosynthesis; chorismate from D-erythrose 4-phosphate and phosphoenolpyruvate: step 6/7. Functionally, catalyzes the transfer of the enolpyruvyl moiety of phosphoenolpyruvate (PEP) to the 5-hydroxyl of shikimate-3-phosphate (S3P) to produce enolpyruvyl shikimate-3-phosphate and inorganic phosphate. The sequence is that of 3-phosphoshikimate 1-carboxyvinyltransferase from Saccharopolyspora erythraea (strain ATCC 11635 / DSM 40517 / JCM 4748 / NBRC 13426 / NCIMB 8594 / NRRL 2338).